The sequence spans 315 residues: MEARAQSGNGSQPLLQTPRDGGRQRGEPDPRDALTQQVHVLSLDQIRAIRNTNEYTEGPTVVPRPGLKPAPRPSTQHKHERLHGLPEHRQPPRLQHSQVHSSARAPLSRSISTVSSGSRSSTRTSTSSSSSEQRLLGSSFSSGPVADGIIRVQPKSELKPGELKPLSKEDLGLHAYRCEDCGKCKCKECTYPRPLPSDWICDKQCLCSAQNVIDYGTCVCCVKGLFYHCSNDDGDNCADNPCSCSQSHCCTRWSAMGVMSLFLPCLWCYLPAKGCLKLCQGCYDRVNRPGCRCKNSNTVCCKVPTVPPRNFEKPT.

The segment covering 1-15 has biased composition (polar residues); sequence MEARAQSGNGSQPLL. Disordered regions lie at residues 1–39 and 51–140; these read MEARAQSGNGSQPLLQTPRDGGRQRGEPDPRDALTQQVH and NTNE…GSSF. The span at 20-32 shows a compositional bias: basic and acidic residues; it reads DGGRQRGEPDPRD. A compositionally biased stretch (low complexity) spans 108 to 140; sequence SRSISTVSSGSRSSTRTSTSSSSSEQRLLGSSF. Positions 118-315 are required for interaction with CAV1; that stretch reads SRSSTRTSTS…VPPRNFEKPT (198 aa). One can recognise an SPR domain in the interval 177 to 291; the sequence is RCEDCGKCKC…CYDRVNRPGC (115 aa). Positions 178 to 315 are required for interaction with TESK1; that stretch reads CEDCGKCKCK…VPPRNFEKPT (138 aa).

This sequence belongs to the sprouty family. In terms of assembly, forms heterodimers with SPRY1. Forms a tripartite complex containing GAB1, METTL13 and SPRY2. Within the complex interacts with METTL13. Interacts with RAF1. Interacts (via C-terminus) with TESK1 (via C-terminus); the interaction disrupts SPRY2 interaction with GRB2, potentially via disruption of SPRY2 serine dephosphorylation. Interacts with PPP2R1A/PP2A-A and PPP2CA/PP2A-C; the interaction with PPP2CA/PP2A-C is inhibited by interaction with TESK1, possibly by vesicular sequestration of SPRY2. Inhibition of the interaction with the serine/threonine-protein phosphatase 2A (PP2A) holoenzyme results in loss of PP2A-mediated dephosphorylation, resulting in the loss of SPRY2 interaction with GRB2. Interacts with GRB2. Interacts with CBL/C-CBL; the interaction inhibits CBL-mediated ubiquitination of EGFR. Interacts (via C-terminus) with CAV1 (via C-terminus). In terms of processing, cleaved at Pro-144 by the prolyl endopeptidase FAP (seprase) activity (in vitro).

The protein resides in the cytoplasm. The protein localises to the cytoskeleton. It is found in the cell projection. It localises to the ruffle membrane. Antagonist of fibroblast growth factor (FGF) pathways via inhibition of FGF-mediated phosphorylation of ERK1/2. Thereby acts as an antagonist of FGF-induced retinal lens fiber differentiation, may inhibit limb bud outgrowth and may negatively modulate respiratory organogenesis. Inhibits TGFB-induced epithelial-to-mesenchymal transition in retinal lens epithelial cells. Inhibits CBL/C-CBL-mediated EGFR ubiquitination. This Macaca fascicularis (Crab-eating macaque) protein is Protein sprouty homolog 2 (SPRY2).